Reading from the N-terminus, the 411-residue chain is CinA-like protein (411 aa).

It belongs to the CinA family.

The protein is CinA-like protein of Dictyoglomus thermophilum (strain ATCC 35947 / DSM 3960 / H-6-12).